A 556-amino-acid chain; its full sequence is MDKRHDPSRRIIAPHGSQLSCKSWLTEAPMRMLMNNLHPDVAERPEDLVVYGGIGRAARDWDCYDKIIEVLKRLEDDETLLVQSGKPVGVFRTHADAPRVLIANSNLVPHWANWEHFNELDKQGLAMYGQMTAGSWIYIGTQGIVQGTYETFVSVAKQHFGGISKGKWILTGGLGGMGGAQTLAGTMAGFSVLACEVDETRIDFRLRTRYVDKKATSLDEALAMIEAANQAGKPVSVGLLANAADVFAELVKRGITPDVVTDQTSAHDPLNGYLPQGWTMAQAADMRKTDEAAVVKAAKASMAVQVQAMLDLQAAGAATLDYGNNIRQMAFETGVKNAFDFPGFVPAYIRPLFCEGIGPFRWVALSGDPEDIYKTDAKVKELIPDNPHLHNWLDMARERIAFQGLPARICWVGLKDRARLAQAFNEMVKNGELSAPIVIGRDHLDSGSVASPNRETESMLDGSDAVSDWPLLNALLNTASGATWVSLHHGGGVGMGFSQHSGVVIVCDGTETAAKRVGRVLWNDPATGVMRHADAGYEIAKNCAKEQGLDLPMLKD.

NAD(+) is bound by residues Gly-52–Gly-53, Gln-130, Gly-176–Gly-178, Glu-196, Arg-201, Asn-242–Ala-243, Gln-263–His-267, Tyr-273–Leu-274, and Tyr-322. Residue Cys-410 is part of the active site. Gly-492 lines the NAD(+) pocket.

The protein belongs to the urocanase family. The cofactor is NAD(+).

The protein resides in the cytoplasm. It catalyses the reaction 4-imidazolone-5-propanoate = trans-urocanate + H2O. The protein operates within amino-acid degradation; L-histidine degradation into L-glutamate; N-formimidoyl-L-glutamate from L-histidine: step 2/3. Catalyzes the conversion of urocanate to 4-imidazolone-5-propionate. The polypeptide is Urocanate hydratase (Shewanella oneidensis (strain ATCC 700550 / JCM 31522 / CIP 106686 / LMG 19005 / NCIMB 14063 / MR-1)).